The chain runs to 180 residues: Shikimate kinase (180 aa).

14-19 (GAGKTC) contacts ATP. Mg(2+) is bound at residue threonine 18. Aspartate 36, arginine 60, and glycine 82 together coordinate substrate. Arginine 120 contributes to the ATP binding site. Residue arginine 139 coordinates substrate.

Belongs to the shikimate kinase family. In terms of assembly, monomer. It depends on Mg(2+) as a cofactor.

It is found in the cytoplasm. It catalyses the reaction shikimate + ATP = 3-phosphoshikimate + ADP + H(+). The protein operates within metabolic intermediate biosynthesis; chorismate biosynthesis; chorismate from D-erythrose 4-phosphate and phosphoenolpyruvate: step 5/7. In terms of biological role, catalyzes the specific phosphorylation of the 3-hydroxyl group of shikimic acid using ATP as a cosubstrate. This Stenotrophomonas maltophilia (strain K279a) protein is Shikimate kinase.